The chain runs to 476 residues: Aspartyl/glutamyl-tRNA(Asn/Gln) amidotransferase subunit B (476 aa).

This sequence belongs to the GatB/GatE family. GatB subfamily. As to quaternary structure, heterotrimer of A, B and C subunits.

It catalyses the reaction L-glutamyl-tRNA(Gln) + L-glutamine + ATP + H2O = L-glutaminyl-tRNA(Gln) + L-glutamate + ADP + phosphate + H(+). The catalysed reaction is L-aspartyl-tRNA(Asn) + L-glutamine + ATP + H2O = L-asparaginyl-tRNA(Asn) + L-glutamate + ADP + phosphate + 2 H(+). In terms of biological role, allows the formation of correctly charged Asn-tRNA(Asn) or Gln-tRNA(Gln) through the transamidation of misacylated Asp-tRNA(Asn) or Glu-tRNA(Gln) in organisms which lack either or both of asparaginyl-tRNA or glutaminyl-tRNA synthetases. The reaction takes place in the presence of glutamine and ATP through an activated phospho-Asp-tRNA(Asn) or phospho-Glu-tRNA(Gln). This chain is Aspartyl/glutamyl-tRNA(Asn/Gln) amidotransferase subunit B, found in Moorella thermoacetica (strain ATCC 39073 / JCM 9320).